The sequence spans 246 residues: 2-aminoethylphosphonate cytidylyltransferase (246 aa).

Positions 19, 20, 34, 97, 114, and 115 each coordinate CMP-(2-aminoethyl)phosphonate. The Mg(2+) site is built by D116 and D145. Positions 145, 161, and 202 each coordinate CMP-(2-aminoethyl)phosphonate. Mg(2+) is bound by residues E226 and D228.

The protein belongs to the LicC/PntC cytidylyltransferase family. As to quaternary structure, monomer. Requires Mg(2+) as cofactor.

It catalyses the reaction (2-aminoethyl)phosphonate + CTP = CMP-(2-aminoethyl)phosphonate + diphosphate. The protein operates within phosphorus metabolism; phosphonate biosynthesis. In terms of biological role, cytidylyltransferase involved in the biosynthesis of cell-surface phosphonates. Catalyzes the activation of 2-aminoethylphosphonate (AEP) to CMP-2-aminoethylphosphonate (CMP-AEP). Can also use phosphocholine, with much lower efficiency. Exhibits strong activity towards CTP, limited activity towards ATP and no activity with GTP. The polypeptide is 2-aminoethylphosphonate cytidylyltransferase (Lancefieldella rimae (strain ATCC 49626 / DSM 7090 / CCUG 31168 / NBRC 15546 / VPI D140H-11A) (Atopobium rimae)).